We begin with the raw amino-acid sequence, 366 residues long: Methyltransferase phm5 (366 aa).

Residues 204–205, Asp230, 255–256, Arg273, and Arg274 each bind S-adenosyl-L-methionine; these read GG and SM.

It belongs to the class I-like SAM-binding methyltransferase superfamily. Cation-independent O-methyltransferase family.

Its pathway is secondary metabolite biosynthesis. Methyltransferase; part of the gene cluster that mediates the biosynthesis of the trans-fused decalin-containing tetramic acid phomasetin, the stereochemical opposite of the HIV-1 integrase inhibitor equisetin. The PKS module of phm1 together with the enoylreductase phm4 catalyze the formation of the polyketide unit which is then conjugated to L-serine by the condensation domain of the phm1 NRPS module. Activity of the Dieckmann cyclase domain (RED) of phm1 results in release of the Dieckmann product intermediate. The Diels-Alderase phm7 then uses the Dieckmann product of phm1 as substrate and catalyzes the Diels-Alder cycloaddition to form the decalin ring of N-desmethylphomasetin. N-desmethylphomasetin is further methylated to phomasetin by the methyltransferase phm5. This chain is Methyltransferase phm5, found in Pyrenochaetopsis sp.